A 158-amino-acid chain; its full sequence is Endoribonuclease YbeY (158 aa).

Residues H119, H123, and D129 each contribute to the Zn(2+) site.

It belongs to the endoribonuclease YbeY family. It depends on Zn(2+) as a cofactor.

Its subcellular location is the cytoplasm. Single strand-specific metallo-endoribonuclease involved in late-stage 70S ribosome quality control and in maturation of the 3' terminus of the 16S rRNA. This chain is Endoribonuclease YbeY, found in Chlamydia abortus (strain DSM 27085 / S26/3) (Chlamydophila abortus).